We begin with the raw amino-acid sequence, 155 residues long: Small ribosomal subunit protein mS86 (155 aa).

The N-terminal 27 residues, 1–27, are a transit peptide targeting the mitochondrion; the sequence is MHYMGLFSRAGNIFRQPRALQASNAML. The RRM domain occupies 36-114; the sequence is SKIFVGGLSP…RIIGVHPADS (79 aa).

It belongs to the GR-RBP family. In terms of assembly, component of the mitochondrial ribosome small subunit.

The protein resides in the mitochondrion. Its function is as follows. Possibly has a role in RNA transcription or processing during stress. In Arabidopsis thaliana (Mouse-ear cress), this protein is Small ribosomal subunit protein mS86 (RBG6).